Reading from the N-terminus, the 930-residue chain is Translation initiation factor IF-2 (930 aa).

The span at 50–67 shows a compositional bias: low complexity; it reads FKPAAAPKVEAKPAAPKV. Disordered stretches follow at residues 50-217 and 260-346; these read FKPA…SSEE and EVVP…HELP. Basic and acidic residues-rich tracts occupy residues 68-90 and 110-125; these read SAEK…EAKP and FKAE…AERR. Positions 129 to 141 are enriched in low complexity; the sequence is KGNNRDQQQNGNR. Basic and acidic residues-rich tracts occupy residues 157–167 and 262–295; these read RDNRRFNDQAK and VPEK…DGPR. The span at 309-318 shows a compositional bias: low complexity; sequence NQKNSNWNNN. The span at 337 to 346 shows a compositional bias: basic and acidic residues; the sequence is VTERKFHELP. The tr-type G domain occupies 432–599; sequence ERPPVVTIMG…TVLLVAEIQE (168 aa). A G1 region spans residues 441–448; sequence GHVDHGKT. Residue 441–448 participates in GTP binding; the sequence is GHVDHGKT. Residues 466–470 are G2; the sequence is GITQH. Positions 487–490 are G3; it reads DTPG. GTP-binding positions include 487 to 491 and 541 to 544; these read DTPGH and NKID. The tract at residues 541–544 is G4; it reads NKID. The G5 stretch occupies residues 577-579; the sequence is SAK.

The protein belongs to the TRAFAC class translation factor GTPase superfamily. Classic translation factor GTPase family. IF-2 subfamily.

The protein resides in the cytoplasm. In terms of biological role, one of the essential components for the initiation of protein synthesis. Protects formylmethionyl-tRNA from spontaneous hydrolysis and promotes its binding to the 30S ribosomal subunits. Also involved in the hydrolysis of GTP during the formation of the 70S ribosomal complex. This Streptococcus pneumoniae (strain ATCC 700669 / Spain 23F-1) protein is Translation initiation factor IF-2.